A 603-amino-acid chain; its full sequence is Extracellular basic protease (603 aa).

The signal sequence occupies residues Met1–Ala21. Residues Gly22–Lys132 constitute a propeptide that is removed on maturation. The Peptidase S8 domain occupies Gln143–Val468. Asp173 (charge relay system) is an active-site residue. A disordered region spans residues Pro197 to Cys221. Intrachain disulfides connect Cys221–Cys273 and Cys315–Cys352. His237 acts as the Charge relay system in catalysis. Ser409 acts as the Charge relay system in catalysis. A propeptide spanning residues Arg477–Phe603 is cleaved from the precursor. A P/Homo B domain is found at Ala478–Phe603.

It belongs to the peptidase S8 family.

The protein localises to the secreted. This chain is Extracellular basic protease (bprV), found in Dichelobacter nodosus (Bacteroides nodosus).